We begin with the raw amino-acid sequence, 462 residues long: Transcript termination protein A18 (462 aa).

The Helicase ATP-binding domain maps to 99–255; that stretch reads KCKEKRPLYT…NSIINFIKFS (157 aa). 112–119 lines the ATP pocket; the sequence is LACGFGKT. The DEAH box signature appears at 205-208; that stretch reads DEAH. The 152-residue stretch at 308–459 folds into the Helicase C-terminal domain; that stretch reads IVDKIIETFK…ATKLGFREVS (152 aa).

The protein belongs to the helicase family. Poxviruses subfamily. As to quaternary structure, interacts with G2. Might be part of a transcription complex composed at least of G2, A18, and H5.

The protein resides in the virion. Functionally, DNA helicase which seems to act as a postreplicative transcription termination factor. Involved in ATP-dependent release of nascent RNA. Forms a stable complex with single-stranded DNA, and to a lesser extent RNA. This Vertebrata (FPV) protein is Transcript termination protein A18.